A 107-amino-acid polypeptide reads, in one-letter code: Cytochrome c2 (107 aa).

At glutamine 1 the chain carries Pyrrolidone carboxylic acid. Residues cysteine 13, cysteine 16, histidine 17, and methionine 79 each coordinate heme c.

The protein belongs to the cytochrome c family. Post-translationally, binds 1 heme c group covalently per subunit.

It is found in the periplasm. Functionally, cytochrome c2 is found mainly in purple, non-sulfur, photosynthetic bacteria where it functions as the electron donor to the oxidized bacteriochlorophyll in the photophosphorylation pathway. However, it may also have a role in the respiratory chain and is found in some non-photosynthetic bacteria. The protein is Cytochrome c2 of Rhodoplanes tepidamans (Rhodoplanes cryptolactis).